Consider the following 581-residue polypeptide: Putative phospholipase B-like 3 (581 aa).

The first 16 residues, 1–16 (MKLLFFLFGLIFAVEQ), serve as a signal peptide directing secretion. Asn-50, Asn-82, Asn-132, Asn-169, Asn-215, Asn-309, Asn-543, Asn-546, and Asn-560 each carry an N-linked (GlcNAc...) asparagine glycan.

Belongs to the phospholipase B-like family.

The protein resides in the secreted. Its function is as follows. Putative phospholipase. This is Putative phospholipase B-like 3 from Caenorhabditis elegans.